The sequence spans 210 residues: dTTP/UTP pyrophosphatase (210 aa).

The active-site Proton acceptor is D85.

Belongs to the Maf family. YhdE subfamily. A divalent metal cation is required as a cofactor.

Its subcellular location is the cytoplasm. It catalyses the reaction dTTP + H2O = dTMP + diphosphate + H(+). The enzyme catalyses UTP + H2O = UMP + diphosphate + H(+). Functionally, nucleoside triphosphate pyrophosphatase that hydrolyzes dTTP and UTP. May have a dual role in cell division arrest and in preventing the incorporation of modified nucleotides into cellular nucleic acids. The sequence is that of dTTP/UTP pyrophosphatase from Saccharophagus degradans (strain 2-40 / ATCC 43961 / DSM 17024).